The chain runs to 357 residues: Protein RecA (357 aa).

71-78 contacts ATP; it reads GPESSGKT.

It belongs to the RecA family.

The protein resides in the cytoplasm. Functionally, can catalyze the hydrolysis of ATP in the presence of single-stranded DNA, the ATP-dependent uptake of single-stranded DNA by duplex DNA, and the ATP-dependent hybridization of homologous single-stranded DNAs. It interacts with LexA causing its activation and leading to its autocatalytic cleavage. The polypeptide is Protein RecA (Ehrlichia canis (strain Jake)).